Here is a 1359-residue protein sequence, read N- to C-terminus: DNA-directed RNA polymerase subunit beta (1359 aa).

It belongs to the RNA polymerase beta chain family. In terms of assembly, the RNAP catalytic core consists of 2 alpha, 1 beta, 1 beta' and 1 omega subunit. When a sigma factor is associated with the core the holoenzyme is formed, which can initiate transcription.

It carries out the reaction RNA(n) + a ribonucleoside 5'-triphosphate = RNA(n+1) + diphosphate. Its function is as follows. DNA-dependent RNA polymerase catalyzes the transcription of DNA into RNA using the four ribonucleoside triphosphates as substrates. The chain is DNA-directed RNA polymerase subunit beta from Nitrosomonas eutropha (strain DSM 101675 / C91 / Nm57).